A 249-amino-acid polypeptide reads, in one-letter code: Exosome complex component Rrp41 (249 aa).

This sequence belongs to the RNase PH family. Rrp41 subfamily. Component of the archaeal exosome complex. Forms a hexameric ring-like arrangement composed of 3 Rrp41-Rrp42 heterodimers. The hexameric ring associates with a trimer of Rrp4 and/or Csl4 subunits.

The protein resides in the cytoplasm. Catalytic component of the exosome, which is a complex involved in RNA degradation. Has 3'-&gt;5' exoribonuclease activity. Can also synthesize heteromeric RNA-tails. This chain is Exosome complex component Rrp41, found in Thermococcus onnurineus (strain NA1).